We begin with the raw amino-acid sequence, 362 residues long: Alkanal monooxygenase alpha chain (362 aa).

The protein belongs to the bacterial luciferase oxidoreductase family. In terms of assembly, heterodimer of an alpha and a beta chain.

The catalysed reaction is a long-chain fatty aldehyde + FMNH2 + O2 = a long-chain fatty acid + hnu + FMN + H2O + 2 H(+). Its function is as follows. Light-emitting reaction in luminous bacteria. The polypeptide is Alkanal monooxygenase alpha chain (luxA) (Photorhabdus luminescens (Xenorhabdus luminescens)).